An 829-amino-acid chain; its full sequence is DNA ligase (829 aa).

Residues 1–23 are disordered; that stretch reads MPAQTSRARPVEEMTAAQAREAH. Residues 47–51, 96–97, and E130 contribute to the NAD(+) site; these read DAEYD and SL. K132 serves as the catalytic N6-AMP-lysine intermediate. Positions 153, 190, 306, and 330 each coordinate NAD(+). Zn(2+)-binding residues include C453, C456, C477, and C483. The region spanning 750–829 is the BRCT domain; sequence AAAAVFSGQT…AEWLAMVEAA (80 aa).

Belongs to the NAD-dependent DNA ligase family. LigA subfamily. It depends on Mg(2+) as a cofactor. Mn(2+) serves as cofactor.

The catalysed reaction is NAD(+) + (deoxyribonucleotide)n-3'-hydroxyl + 5'-phospho-(deoxyribonucleotide)m = (deoxyribonucleotide)n+m + AMP + beta-nicotinamide D-nucleotide.. Its function is as follows. DNA ligase that catalyzes the formation of phosphodiester linkages between 5'-phosphoryl and 3'-hydroxyl groups in double-stranded DNA using NAD as a coenzyme and as the energy source for the reaction. It is essential for DNA replication and repair of damaged DNA. In Methylobacterium nodulans (strain LMG 21967 / CNCM I-2342 / ORS 2060), this protein is DNA ligase.